A 241-amino-acid polypeptide reads, in one-letter code: MSLGEGKLIYEGKAKRVYLINNEELVMEFKDEVTALDGARKEYAPGKGKLAASQTAFFMSYLNESGVRTHFINWDGDRRIHVRRLRMIPVEVIVRNYAYGSFIRRMPLIKPLTKFTTPLVEFHLKNDELHDPLILIEDIIEAGLTSMEQVMEIRSVSLKVNHLLSELLGKYGLTLVDFKLEFGVNSNGALVLADELSGDTMRVLMNGKHLDKELFRMGGSVKELIEAYSRLNSILGLGLKG.

The protein belongs to the SAICAR synthetase family.

The catalysed reaction is 5-amino-1-(5-phospho-D-ribosyl)imidazole-4-carboxylate + L-aspartate + ATP = (2S)-2-[5-amino-1-(5-phospho-beta-D-ribosyl)imidazole-4-carboxamido]succinate + ADP + phosphate + 2 H(+). Its pathway is purine metabolism; IMP biosynthesis via de novo pathway; 5-amino-1-(5-phospho-D-ribosyl)imidazole-4-carboxamide from 5-amino-1-(5-phospho-D-ribosyl)imidazole-4-carboxylate: step 1/2. The polypeptide is Phosphoribosylaminoimidazole-succinocarboxamide synthase (Caldivirga maquilingensis (strain ATCC 700844 / DSM 13496 / JCM 10307 / IC-167)).